Consider the following 120-residue polypeptide: NAD(P)H-quinone oxidoreductase subunit 3, organellar chromatophore (120 aa).

A run of 3 helical transmembrane segments spans residues 6 to 26, 64 to 84, and 89 to 109; these read GYDA…LALL, MFAL…PWAV, and LGLL…IALA.

Belongs to the complex I subunit 3 family. In terms of assembly, NDH is composed of at least 16 different subunits, 5 of which are encoded in the nucleus.

It localises to the plastid. The protein resides in the organellar chromatophore thylakoid membrane. It catalyses the reaction a plastoquinone + NADH + (n+1) H(+)(in) = a plastoquinol + NAD(+) + n H(+)(out). The enzyme catalyses a plastoquinone + NADPH + (n+1) H(+)(in) = a plastoquinol + NADP(+) + n H(+)(out). Functionally, NDH shuttles electrons from NAD(P)H:plastoquinone, via FMN and iron-sulfur (Fe-S) centers, to quinones in the photosynthetic chain and possibly in a chloroplast respiratory chain. The immediate electron acceptor for the enzyme in this species is believed to be plastoquinone. Couples the redox reaction to proton translocation, and thus conserves the redox energy in a proton gradient. This Paulinella chromatophora protein is NAD(P)H-quinone oxidoreductase subunit 3, organellar chromatophore.